A 395-amino-acid polypeptide reads, in one-letter code: S-adenosylmethionine synthase (395 aa).

Residue His16 coordinates ATP. A Mg(2+)-binding site is contributed by Asp18. Glu44 contacts K(+). Positions 57 and 100 each coordinate L-methionine. The segment at 100–110 (QSPDIAQGVDR) is flexible loop. ATP contacts are provided by residues 167–169 (DAK), 233–234 (RF), Asp242, 248–249 (RK), Ala265, and Lys269. Asp242 serves as a coordination point for L-methionine. Residue Lys273 coordinates L-methionine.

It belongs to the AdoMet synthase family. As to quaternary structure, homotetramer; dimer of dimers. Requires Mg(2+) as cofactor. K(+) serves as cofactor.

The protein resides in the cytoplasm. It catalyses the reaction L-methionine + ATP + H2O = S-adenosyl-L-methionine + phosphate + diphosphate. Its pathway is amino-acid biosynthesis; S-adenosyl-L-methionine biosynthesis; S-adenosyl-L-methionine from L-methionine: step 1/1. Catalyzes the formation of S-adenosylmethionine (AdoMet) from methionine and ATP. The overall synthetic reaction is composed of two sequential steps, AdoMet formation and the subsequent tripolyphosphate hydrolysis which occurs prior to release of AdoMet from the enzyme. The protein is S-adenosylmethionine synthase of Burkholderia mallei (strain NCTC 10247).